A 762-amino-acid chain; its full sequence is 5-methyltetrahydropteroyltriglutamate--homocysteine methyltransferase (762 aa).

5-methyltetrahydropteroyltri-L-glutamate-binding positions include 17–20 (REWK) and Lys111. Residues 435-437 (IGS) and Glu488 contribute to the L-homocysteine site. L-methionine contacts are provided by residues 435-437 (IGS) and Glu488. Residues 519 to 520 (RC) and Trp565 contribute to the 5-methyltetrahydropteroyltri-L-glutamate site. Asp603 contacts L-homocysteine. Position 603 (Asp603) interacts with L-methionine. Glu609 is a binding site for 5-methyltetrahydropteroyltri-L-glutamate. Positions 645, 647, and 669 each coordinate Zn(2+). His698 serves as the catalytic Proton donor. Cys730 serves as a coordination point for Zn(2+).

This sequence belongs to the vitamin-B12 independent methionine synthase family. The cofactor is Zn(2+).

It carries out the reaction 5-methyltetrahydropteroyltri-L-glutamate + L-homocysteine = tetrahydropteroyltri-L-glutamate + L-methionine. The protein operates within amino-acid biosynthesis; L-methionine biosynthesis via de novo pathway; L-methionine from L-homocysteine (MetE route): step 1/1. Functionally, catalyzes the transfer of a methyl group from 5-methyltetrahydrofolate to homocysteine resulting in methionine formation. This Bacillus anthracis (strain A0248) protein is 5-methyltetrahydropteroyltriglutamate--homocysteine methyltransferase.